We begin with the raw amino-acid sequence, 61 residues long: MAKLRITQIRSGIGGTRNQRETLRTLGLRKINASTVRDDRPEVLGMIATVTHLVRVEEVDS.

It belongs to the universal ribosomal protein uL30 family. Part of the 50S ribosomal subunit.

The polypeptide is Large ribosomal subunit protein uL30 (Parafrankia sp. (strain EAN1pec)).